We begin with the raw amino-acid sequence, 252 residues long: NDR1/HIN1-like protein 6 (252 aa).

Positions 1-46 (MSQHQKIYPVQDPEAATARPTAPLVPRGSSRSEHGDPSKVPLNQRP) are disordered. Residues 70-90 (FCFLLLLVVAVGASIGILYLV) traverse the membrane as a helical segment. Asparagine 121, asparagine 154, asparagine 166, and asparagine 180 each carry an N-linked (GlcNAc...) asparagine glycan.

As to quaternary structure, homodimer. Highly expressed in seeds and at lower level in roots and senescing leaves. Expressed in leaves and flowers.

It is found in the cell membrane. The protein localises to the cytoplasm. It localises to the cytosol. In terms of biological role, plays an important role in the abiotic stresses-induced abscisic acid (ABA) signaling and biosynthesis. Acts as a positive regulator of ABA-mediated seed germination inhibition. Functions downstream of ABF2/AREB1, ABF4/AREB2 and ABF3. This is NDR1/HIN1-like protein 6 from Arabidopsis thaliana (Mouse-ear cress).